We begin with the raw amino-acid sequence, 172 residues long: Protein GrpE (172 aa).

Belongs to the GrpE family. As to quaternary structure, homodimer.

It localises to the cytoplasm. In terms of biological role, participates actively in the response to hyperosmotic and heat shock by preventing the aggregation of stress-denatured proteins, in association with DnaK and GrpE. It is the nucleotide exchange factor for DnaK and may function as a thermosensor. Unfolded proteins bind initially to DnaJ; upon interaction with the DnaJ-bound protein, DnaK hydrolyzes its bound ATP, resulting in the formation of a stable complex. GrpE releases ADP from DnaK; ATP binding to DnaK triggers the release of the substrate protein, thus completing the reaction cycle. Several rounds of ATP-dependent interactions between DnaJ, DnaK and GrpE are required for fully efficient folding. The protein is Protein GrpE of Thermotoga petrophila (strain ATCC BAA-488 / DSM 13995 / JCM 10881 / RKU-1).